Here is a 241-residue protein sequence, read N- to C-terminus: MGKRLIIQRRGRGTPAHRVASHRFKDKIRYRSYDALEKEGSIKGIVTDIVHDPARTAPIAEVKFENGEKKFILAPESIQIDDEIECGISAPIKFGNTLPLAEIPEGTPIYDIENTPGDGGRFVRSSGTYASLITHDANQSVVELPSGELKYLNPRCRASIGVVAGGGRKEKPFLKAGNRWHAYKAKGKKFMTVRGVAMNAVDHPHGGGNRQHPGRPTTVSRHAPPGRKVGSIAAKRTGLKR.

The disordered stretch occupies residues 201-241 (VDHPHGGGNRQHPGRPTTVSRHAPPGRKVGSIAAKRTGLKR).

The protein belongs to the universal ribosomal protein uL2 family. As to quaternary structure, part of the 50S ribosomal subunit. Forms a bridge to the 30S subunit in the 70S ribosome.

In terms of biological role, one of the primary rRNA binding proteins. Required for association of the 30S and 50S subunits to form the 70S ribosome, for tRNA binding and peptide bond formation. It has been suggested to have peptidyltransferase activity; this is somewhat controversial. Makes several contacts with the 16S rRNA in the 70S ribosome. This chain is Large ribosomal subunit protein uL2, found in Methanobrevibacter smithii (strain ATCC 35061 / DSM 861 / OCM 144 / PS).